The primary structure comprises 260 residues: MQAANDHFFTGLSKKGPVRKENQDFYGFSFNQNNLLIVVCDGLGGYKGGKIASNLVGKLFLSLFEGFEFNQWDETTVKKWFENTLIQARFQLENCFQTVYEAQIQFARMASTLVLGILTKSDIYIFWIGDSRAYLLFENQAKLVTKDHNLYNQLVAMNADEKLLLSYSNQLLALTNTISKETKRPLVYGFYNTKIEQQEFLLLCSDGLYNFVEKELFFEIITNSKNLKQAVFNLYRKSIENASNDNITAALVNLQKWKQS.

A PPM-type phosphatase domain is found at F9–L254.

The catalysed reaction is O-phospho-L-seryl-[protein] + H2O = L-seryl-[protein] + phosphate. The enzyme catalyses O-phospho-L-threonyl-[protein] + H2O = L-threonyl-[protein] + phosphate. This is Putative protein phosphatase from Mycoplasma genitalium (strain ATCC 33530 / DSM 19775 / NCTC 10195 / G37) (Mycoplasmoides genitalium).